The following is a 316-amino-acid chain: Transaldolase (316 aa).

Lys-125 acts as the Schiff-base intermediate with substrate in catalysis.

This sequence belongs to the transaldolase family. Type 1 subfamily. In terms of assembly, homodimer.

It localises to the cytoplasm. It carries out the reaction D-sedoheptulose 7-phosphate + D-glyceraldehyde 3-phosphate = D-erythrose 4-phosphate + beta-D-fructose 6-phosphate. Its pathway is carbohydrate degradation; pentose phosphate pathway; D-glyceraldehyde 3-phosphate and beta-D-fructose 6-phosphate from D-ribose 5-phosphate and D-xylulose 5-phosphate (non-oxidative stage): step 2/3. Functionally, transaldolase is important for the balance of metabolites in the pentose-phosphate pathway. This Acidovorax ebreus (strain TPSY) (Diaphorobacter sp. (strain TPSY)) protein is Transaldolase.